Consider the following 209-residue polypeptide: Ferritin heavy chain (209 aa).

Positions 1–27 (MMKSVFFGVVAITVAILSIYQETAQAQ) are cleaved as a signal peptide. In terms of domain architecture, Ferritin-like diiron spans 40–193 (DSVDDQCLAA…EKIATLKKMK (154 aa)). 5 residues coordinate Fe cation: E57, E92, H95, E140, and Q175.

It belongs to the ferritin family. As to quaternary structure, oligomer of 24 subunits. There are two types of subunits: L (light) chain and H (heavy) chain. The functional molecule forms a roughly spherical shell with a diameter of 12 nm and contains a central cavity into which the insoluble mineral iron core is deposited.

The protein localises to the secreted. It localises to the cytoplasm. The catalysed reaction is 4 Fe(2+) + O2 + 4 H(+) = 4 Fe(3+) + 2 H2O. Stores iron in a soluble, non-toxic, readily available form. Important for iron homeostasis. Has ferroxidase activity. Iron is taken up in the ferrous form and deposited as ferric hydroxides after oxidation. This is Ferritin heavy chain (FERH) from Aedes aegypti (Yellowfever mosquito).